The following is a 437-amino-acid chain: Protein RecA (437 aa).

Residue 69 to 76 (GPESSGKT) participates in ATP binding. Residues 343-437 (HDAAVRTSPD…GNGKSVKRKG (95 aa)) form a disordered region. 3 stretches are compositionally biased toward polar residues: residues 350-371 (SPDTNSRKVSGTGAVHTTSGSP), 380-391 (GAVNNSRDSTGG), and 400-426 (LNLSVNRDVSTDTVSSKISDATHNQKP).

This sequence belongs to the RecA family.

The protein localises to the cytoplasm. Functionally, can catalyze the hydrolysis of ATP in the presence of single-stranded DNA, the ATP-dependent uptake of single-stranded DNA by duplex DNA, and the ATP-dependent hybridization of homologous single-stranded DNAs. It interacts with LexA causing its activation and leading to its autocatalytic cleavage. This is Protein RecA from Tropheryma whipplei (strain Twist) (Whipple's bacillus).